The primary structure comprises 288 residues: MTDNKTVPNGAPILYIVPTPIGNLGDITQRALDVLASVDMIAVEDTRHTGKLLAHFNISTKTFALHDHNEQQKAQVLVDKLLSGLSIALVSDAGTPLISDPGYHLVTQCRQAGVKVVPLPGPCAVITALSASGLPSDSFSFEGFLPAKSKARKDKLLEIAKVSRTCIFYESPHRICESLQDMLDVLGGEREVVLARELTKTFETIQGMPLAELITWIAEDDNRKKGEMVLLVHGYRDAGEQQLPDEALRTLTILTKELPLKKAAALVAEIHQLKKNALYKWGLENLGE.

Belongs to the methyltransferase superfamily. RsmI family.

It localises to the cytoplasm. It catalyses the reaction cytidine(1402) in 16S rRNA + S-adenosyl-L-methionine = 2'-O-methylcytidine(1402) in 16S rRNA + S-adenosyl-L-homocysteine + H(+). Catalyzes the 2'-O-methylation of the ribose of cytidine 1402 (C1402) in 16S rRNA. This Vibrio cholerae serotype O1 (strain ATCC 39315 / El Tor Inaba N16961) protein is Ribosomal RNA small subunit methyltransferase I.